Here is a 713-residue protein sequence, read N- to C-terminus: Ribosomal RNA large subunit methyltransferase K/L (713 aa).

The region spanning 43–154 is the THUMP domain; sequence LAYRITLWTR…NGVITIAMNF (112 aa).

Belongs to the methyltransferase superfamily. RlmKL family.

The protein resides in the cytoplasm. The enzyme catalyses guanosine(2445) in 23S rRNA + S-adenosyl-L-methionine = N(2)-methylguanosine(2445) in 23S rRNA + S-adenosyl-L-homocysteine + H(+). It catalyses the reaction guanosine(2069) in 23S rRNA + S-adenosyl-L-methionine = N(2)-methylguanosine(2069) in 23S rRNA + S-adenosyl-L-homocysteine + H(+). Its function is as follows. Specifically methylates the guanine in position 2445 (m2G2445) and the guanine in position 2069 (m7G2069) of 23S rRNA. The protein is Ribosomal RNA large subunit methyltransferase K/L of Shewanella sp. (strain MR-7).